The following is a 543-amino-acid chain: Ribosomal protein arginine N-methyltransferase rmt3 (543 aa).

The segment at 58–81 (FCCLFCDSTFTCLKDLWSHCKEAH) adopts a C2H2-type zinc-finger fold. The SAM-dependent MTase PRMT-type domain maps to 217–543 (DSYYFESYAG…KADSQSYVLN (327 aa)). The S-adenosyl-L-homocysteine site is built by arginine 239, glycine 263, aspartate 285, serine 287, isoleucine 313, and glutamate 314. Catalysis depends on residues glutamate 329 and glutamate 338.

Belongs to the class I-like SAM-binding methyltransferase superfamily. Protein arginine N-methyltransferase family. In terms of assembly, interacts with ef1a-c, rps2 and rps24. Note=Associates with the 40S ribosomal particle.

The protein resides in the cytoplasm. It is found in the cytosol. It carries out the reaction L-arginyl-[protein] + S-adenosyl-L-methionine = N(omega)-methyl-L-arginyl-[protein] + S-adenosyl-L-homocysteine + H(+). The catalysed reaction is L-arginyl-[protein] + 2 S-adenosyl-L-methionine = N(omega),N(omega)-dimethyl-L-arginyl-[protein] + 2 S-adenosyl-L-homocysteine + 2 H(+). Its function is as follows. Methylates (mono and asymmetric dimethylation) the guanidino nitrogens of arginyl residues in ribosomal protein rps2. The protein is Ribosomal protein arginine N-methyltransferase rmt3 (rmt3) of Schizosaccharomyces pombe (strain 972 / ATCC 24843) (Fission yeast).